The primary structure comprises 227 residues: Protein LppM (227 aa).

An N-terminal signal peptide occupies residues 1–24 (MARTRRRGMLAIAMLLMLVPLATG). A lipid anchor (N-palmitoyl cysteine) is attached at cysteine 25. Cysteine 25 carries the S-diacylglycerol cysteine lipid modification. The important for bacterial uptake by host macrophages stretch occupies residues 26-185 (LRVRASITIS…ARYTDPNTRS (160 aa)). Residues 190 to 210 (GIWLGIAAFAAAGVVAVLAWI) form a helical membrane-spanning segment.

In terms of processing, a shorter form (about 20 kDa) is secreted; upon overexpression of the whole protein in M.smegmatis the C-terminus of the short form is about residue 187, suggesting it is generated by cleavage of the protein before its C-terminal transmembrane domain.

The protein localises to the membrane. Its subcellular location is the secreted. The protein resides in the cell wall. In terms of biological role, a putative lipoprotein that seems to be specialized for the initial steps of macrophage infection. A non-acylated fragment (residues 26-185) binds phosphatidyl-myo-inositol mannosides (PIMs). Limits, in a TLR2-dependent fashion, bacterial uptake by host (mouse); this effect may be mediated by nonacylated fragment 26-185. Plays a TLR2-dependent role in host phagosome maturation arrest. Plays a TLR2-independent role in chemokine production during the first 24 hours of mouse infection. The sequence is that of Protein LppM (lppM) from Mycobacterium tuberculosis (strain ATCC 25618 / H37Rv).